The primary structure comprises 733 residues: 2'-5'-oligoadenylate synthase 2 (733 aa).

A lipid anchor (N-myristoyl glycine) is attached at glycine 2. OAS domain regions lie at residues valine 47–valine 365 and threonine 373–proline 713. Lysine 408 is subject to N6-acetyllysine. Serine 427 serves as a coordination point for ATP. Residues aspartate 439, aspartate 441, and aspartate 510 each coordinate Mg(2+). Residues arginine 574 and lysine 577 each coordinate ATP.

It belongs to the 2-5A synthase family. As to quaternary structure, homodimer. Requires Mg(2+) as cofactor. Myristoylation is not essential for its activity. In terms of processing, glycosylated. Glycosylation is essential for its activity.

The protein localises to the cytoplasm. Its subcellular location is the perinuclear region. The catalysed reaction is 3 ATP = 5'-triphosphoadenylyl-(2'-&gt;5')-adenylyl-(2'-&gt;5')-adenosine + 2 diphosphate. With respect to regulation, produced as a latent enzyme which is activated by double stranded RNA (dsRNA) generated during the course of viral infection. The dsRNA activator must be at least 15 nucleotides long, and no modification of the 2'-hydroxyl group is tolerated. ssRNA or dsDNA do not act as activators. Strongly inhibited by copper, iron and zinc ions. Partially inhibited by cobalt and nickel ions. Its function is as follows. Interferon-induced, dsRNA-activated antiviral enzyme which plays a critical role in cellular innate antiviral response. Activated by detection of double stranded RNA (dsRNA): polymerizes higher oligomers of 2'-5'-oligoadenylates (2-5A) from ATP which then bind to the inactive monomeric form of ribonuclease L (RNASEL) leading to its dimerization and subsequent activation. Activation of RNASEL leads to degradation of cellular as well as viral RNA, resulting in the inhibition of protein synthesis, thus terminating viral replication. Can mediate the antiviral effect via the classical RNASEL-dependent pathway or an alternative antiviral pathway independent of RNASEL. In addition, it may also play a role in other cellular processes such as apoptosis, cell growth, differentiation and gene regulation. May act as a negative regulator of lactation, stopping lactation in virally infected mammary gland lobules, thereby preventing transmission of viruses to neonates. Non-infected lobules would not be affected, allowing efficient pup feeding during infection. This chain is 2'-5'-oligoadenylate synthase 2 (Oas2), found in Rattus norvegicus (Rat).